The chain runs to 61 residues: Large ribosomal subunit protein bL32 (61 aa).

Belongs to the bacterial ribosomal protein bL32 family.

The polypeptide is Large ribosomal subunit protein bL32 (Hyphomonas neptunium (strain ATCC 15444)).